We begin with the raw amino-acid sequence, 101 residues long: MAKKSKIVAQKKREKLVAQYAERRAELKAIMKCPTASLDERMEASRKLSRLPRDSSPVRLRNRDQVDGRPRGYVGKAGVSRARFREMAHRGELPGITKSSW.

A disordered region spans residues 44–74; the sequence is ASRKLSRLPRDSSPVRLRNRDQVDGRPRGYV. The span at 61-70 shows a compositional bias: basic and acidic residues; it reads RNRDQVDGRP.

It belongs to the universal ribosomal protein uS14 family. Part of the 30S ribosomal subunit. Contacts proteins S3 and S10.

Functionally, binds 16S rRNA, required for the assembly of 30S particles and may also be responsible for determining the conformation of the 16S rRNA at the A site. The sequence is that of Small ribosomal subunit protein uS14 from Cutibacterium acnes (strain DSM 16379 / KPA171202) (Propionibacterium acnes).